The chain runs to 350 residues: DNA polymerase IV (350 aa).

The UmuC domain occupies 7 to 188; the sequence is IIHIDMDYFF…LPVKKLFGVG (182 aa). Mg(2+) contacts are provided by aspartate 11 and aspartate 106. Residue glutamate 107 is part of the active site.

It belongs to the DNA polymerase type-Y family. In terms of assembly, monomer. The cofactor is Mg(2+).

It localises to the cytoplasm. It catalyses the reaction DNA(n) + a 2'-deoxyribonucleoside 5'-triphosphate = DNA(n+1) + diphosphate. Poorly processive, error-prone DNA polymerase involved in untargeted mutagenesis. Copies undamaged DNA at stalled replication forks, which arise in vivo from mismatched or misaligned primer ends. These misaligned primers can be extended by PolIV. Exhibits no 3'-5' exonuclease (proofreading) activity. May be involved in translesional synthesis, in conjunction with the beta clamp from PolIII. This chain is DNA polymerase IV, found in Francisella philomiragia subsp. philomiragia (strain ATCC 25017 / CCUG 19701 / FSC 153 / O#319-036).